The primary structure comprises 351 residues: Photosystem II D2 protein (351 aa).

Residues 39–59 (TAYLALGGWFTGTTFVTSWYT) traverse the membrane as a helical segment. A chlorophyll a-binding site is contributed by histidine 116. A helical transmembrane segment spans residues 123 to 139 (GFMLRQFEIARLVGIRP). Residues glutamine 128 and asparagine 141 each contribute to the pheophytin a site. Residues 151 to 164 (VFLACFLIYPLGQH) traverse the membrane as a helical segment. Histidine 196 lines the chlorophyll a pocket. A helical membrane pass occupies residues 206–226 (GALLCGIHGATVQNTLFEDGA). A plastoquinone-binding residues include histidine 213 and phenylalanine 260. Histidine 213 contacts Fe cation. Histidine 267 lines the Fe cation pocket. Residues 277 to 293 (GMWTPSVGIVGLAVNLR) form a helical membrane-spanning segment.

This sequence belongs to the reaction center PufL/M/PsbA/D family. PSII is composed of 1 copy each of membrane proteins PsbA, PsbB, PsbC, PsbD, PsbE, PsbF, PsbH, PsbI, PsbJ, PsbK, PsbL, PsbM, PsbT, PsbX, PsbY, Psb30/Ycf12, peripheral proteins PsbO, CyanoQ (PsbQ), PsbU, PsbV and a large number of cofactors. It forms dimeric complexes. The cofactor is The D1/D2 heterodimer binds P680, chlorophylls that are the primary electron donor of PSII, and subsequent electron acceptors. It shares a non-heme iron and each subunit binds pheophytin, quinone, additional chlorophylls, carotenoids and lipids. There is also a Cl(-1) ion associated with D1 and D2, which is required for oxygen evolution. The PSII complex binds additional chlorophylls, carotenoids and specific lipids..

It localises to the cellular thylakoid membrane. The enzyme catalyses 2 a plastoquinone + 4 hnu + 2 H2O = 2 a plastoquinol + O2. Photosystem II (PSII) is a light-driven water:plastoquinone oxidoreductase that uses light energy to abstract electrons from H(2)O, generating O(2) and a proton gradient subsequently used for ATP formation. It consists of a core antenna complex that captures photons, and an electron transfer chain that converts photonic excitation into a charge separation. The D1/D2 (PsbA/PsbD) reaction center heterodimer binds P680, the primary electron donor of PSII as well as several subsequent electron acceptors. D2 is needed for assembly of a stable PSII complex. The sequence is that of Photosystem II D2 protein from Prochlorococcus marinus (strain MIT 9313).